The following is a 419-amino-acid chain: UDP-N-acetylglucosamine 1-carboxyvinyltransferase (419 aa).

22 to 23 is a binding site for phosphoenolpyruvate; it reads KN. Arg93 contacts UDP-N-acetyl-alpha-D-glucosamine. Cys117 acts as the Proton donor in catalysis. Position 117 is a 2-(S-cysteinyl)pyruvic acid O-phosphothioketal (Cys117). The UDP-N-acetyl-alpha-D-glucosamine site is built by Asp306 and Ile328.

It belongs to the EPSP synthase family. MurA subfamily.

The protein localises to the cytoplasm. It carries out the reaction phosphoenolpyruvate + UDP-N-acetyl-alpha-D-glucosamine = UDP-N-acetyl-3-O-(1-carboxyvinyl)-alpha-D-glucosamine + phosphate. It functions in the pathway cell wall biogenesis; peptidoglycan biosynthesis. In terms of biological role, cell wall formation. Adds enolpyruvyl to UDP-N-acetylglucosamine. In Idiomarina loihiensis (strain ATCC BAA-735 / DSM 15497 / L2-TR), this protein is UDP-N-acetylglucosamine 1-carboxyvinyltransferase.